The primary structure comprises 617 residues: Dihydroxy-acid dehydratase (617 aa).

Residue aspartate 81 participates in Mg(2+) binding. Residue cysteine 122 coordinates [2Fe-2S] cluster. Residues aspartate 123 and lysine 124 each coordinate Mg(2+). N6-carboxylysine is present on lysine 124. Cysteine 195 is a binding site for [2Fe-2S] cluster. Residue glutamate 492 coordinates Mg(2+). Catalysis depends on serine 518, which acts as the Proton acceptor.

This sequence belongs to the IlvD/Edd family. As to quaternary structure, homodimer. [2Fe-2S] cluster serves as cofactor. Requires Mg(2+) as cofactor.

It carries out the reaction (2R)-2,3-dihydroxy-3-methylbutanoate = 3-methyl-2-oxobutanoate + H2O. The enzyme catalyses (2R,3R)-2,3-dihydroxy-3-methylpentanoate = (S)-3-methyl-2-oxopentanoate + H2O. It participates in amino-acid biosynthesis; L-isoleucine biosynthesis; L-isoleucine from 2-oxobutanoate: step 3/4. It functions in the pathway amino-acid biosynthesis; L-valine biosynthesis; L-valine from pyruvate: step 3/4. In terms of biological role, functions in the biosynthesis of branched-chain amino acids. Catalyzes the dehydration of (2R,3R)-2,3-dihydroxy-3-methylpentanoate (2,3-dihydroxy-3-methylvalerate) into 2-oxo-3-methylpentanoate (2-oxo-3-methylvalerate) and of (2R)-2,3-dihydroxy-3-methylbutanoate (2,3-dihydroxyisovalerate) into 2-oxo-3-methylbutanoate (2-oxoisovalerate), the penultimate precursor to L-isoleucine and L-valine, respectively. In Buchnera aphidicola subsp. Cinara cedri (strain Cc), this protein is Dihydroxy-acid dehydratase.